We begin with the raw amino-acid sequence, 335 residues long: DNA-directed RNA polymerase subunit alpha (335 aa).

The alpha N-terminal domain (alpha-NTD) stretch occupies residues 1-248; it reads MTIQTSRTLS…GLFAPLQEVS (248 aa). Positions 256–335 are alpha C-terminal domain (alpha-CTD); sequence KPDEDNQKNQ…LPRTREKGKA (80 aa).

Belongs to the RNA polymerase alpha chain family. In terms of assembly, in cyanobacteria the RNAP catalytic core is composed of 2 alpha, 1 beta, 1 beta', 1 gamma and 1 omega subunit. When a sigma factor is associated with the core the holoenzyme is formed, which can initiate transcription.

The enzyme catalyses RNA(n) + a ribonucleoside 5'-triphosphate = RNA(n+1) + diphosphate. Its function is as follows. DNA-dependent RNA polymerase catalyzes the transcription of DNA into RNA using the four ribonucleoside triphosphates as substrates. The chain is DNA-directed RNA polymerase subunit alpha from Synechococcus sp. (strain JA-2-3B'a(2-13)) (Cyanobacteria bacterium Yellowstone B-Prime).